A 188-amino-acid chain; its full sequence is ATP synthase subunit b (188 aa).

A helical transmembrane segment spans residues 19-39 (VYVLGATIVSFLILFLFITYF).

Belongs to the ATPase B chain family. In terms of assembly, F-type ATPases have 2 components, F(1) - the catalytic core - and F(0) - the membrane proton channel. F(1) has five subunits: alpha(3), beta(3), gamma(1), delta(1), epsilon(1). F(0) has three main subunits: a(1), b(2) and c(10-14). The alpha and beta chains form an alternating ring which encloses part of the gamma chain. F(1) is attached to F(0) by a central stalk formed by the gamma and epsilon chains, while a peripheral stalk is formed by the delta and b chains.

The protein resides in the cell membrane. F(1)F(0) ATP synthase produces ATP from ADP in the presence of a proton or sodium gradient. F-type ATPases consist of two structural domains, F(1) containing the extramembraneous catalytic core and F(0) containing the membrane proton channel, linked together by a central stalk and a peripheral stalk. During catalysis, ATP synthesis in the catalytic domain of F(1) is coupled via a rotary mechanism of the central stalk subunits to proton translocation. Its function is as follows. Component of the F(0) channel, it forms part of the peripheral stalk, linking F(1) to F(0). The protein is ATP synthase subunit b of Mesomycoplasma hyopneumoniae (strain J / ATCC 25934 / NCTC 10110) (Mycoplasma hyopneumoniae).